Consider the following 423-residue polypeptide: Enolase (423 aa).

(2R)-2-phosphoglycerate is bound at residue glutamine 166. Glutamate 208 functions as the Proton donor in the catalytic mechanism. Positions 242, 283, and 310 each coordinate Mg(2+). Lysine 335, arginine 364, serine 365, and lysine 386 together coordinate (2R)-2-phosphoglycerate. The Proton acceptor role is filled by lysine 335.

This sequence belongs to the enolase family. The cofactor is Mg(2+).

The protein resides in the cytoplasm. It localises to the secreted. It is found in the cell surface. The enzyme catalyses (2R)-2-phosphoglycerate = phosphoenolpyruvate + H2O. The protein operates within carbohydrate degradation; glycolysis; pyruvate from D-glyceraldehyde 3-phosphate: step 4/5. Its function is as follows. Catalyzes the reversible conversion of 2-phosphoglycerate (2-PG) into phosphoenolpyruvate (PEP). It is essential for the degradation of carbohydrates via glycolysis. This Elusimicrobium minutum (strain Pei191) protein is Enolase.